The sequence spans 132 residues: DNA-directed RNA polymerase subunit omega (132 aa).

Belongs to the RNA polymerase subunit omega family. The RNAP catalytic core consists of 2 alpha, 1 beta, 1 beta' and 1 omega subunit. When a sigma factor is associated with the core the holoenzyme is formed, which can initiate transcription.

It carries out the reaction RNA(n) + a ribonucleoside 5'-triphosphate = RNA(n+1) + diphosphate. Functionally, promotes RNA polymerase assembly. Latches the N- and C-terminal regions of the beta' subunit thereby facilitating its interaction with the beta and alpha subunits. This Bartonella quintana (strain Toulouse) (Rochalimaea quintana) protein is DNA-directed RNA polymerase subunit omega.